Reading from the N-terminus, the 173-residue chain is Protein tyrosine phosphatase type IVA 3 (173 aa).

Residues 8-161 (APVEVSYKNM…YRPKQRLRFK (154 aa)) enclose the Tyrosine-protein phosphatase domain. A disulfide bridge connects residues Cys49 and Cys104. Asp72 acts as the Proton donor in catalysis. Catalysis depends on Cys104, which acts as the Phosphocysteine intermediate. Arg110 provides a ligand contact to substrate. Cys170 bears the Cysteine methyl ester mark. The S-farnesyl cysteine moiety is linked to residue Cys170. Positions 171-173 (CIM) are cleaved as a propeptide — removed in mature form.

The protein belongs to the protein-tyrosine phosphatase family. In terms of assembly, interacts with tubulin. Post-translationally, farnesylated. Farnesylation is required for membrane targeting. Unfarnesylated forms are shifted into the nucleus.

It localises to the cell membrane. Its subcellular location is the early endosome. The enzyme catalyses O-phospho-L-tyrosyl-[protein] + H2O = L-tyrosyl-[protein] + phosphate. Inhibited by sodium orthovanadate and peroxovanadium compounds, and by pentamidine. Its function is as follows. Protein tyrosine phosphatase which stimulates progression from G1 into S phase during mitosis. Enhances cell proliferation, cell motility and invasive activity, and promotes cancer metastasis. May be involved in the progression of cardiac hypertrophy by inhibiting intracellular calcium mobilization in response to angiotensin II. The protein is Protein tyrosine phosphatase type IVA 3 (PTP4A3) of Bos taurus (Bovine).